Here is a 109-residue protein sequence, read N- to C-terminus: Cysteine-rich venom protein 7 (109 aa).

The N-terminal stretch at 1-21 (MSKVFVIILVALMVAISIASA) is a signal peptide. Intrachain disulfides connect cysteine 30-cysteine 47, cysteine 37-cysteine 52, cysteine 46-cysteine 58, cysteine 70-cysteine 90, and cysteine 78-cysteine 98.

Expressed by the venom gland.

Its subcellular location is the secreted. The chain is Cysteine-rich venom protein 7 from Pimpla hypochondriaca (Parasitoid wasp).